The sequence spans 64 residues: Large ribosomal subunit protein bL33c (64 aa).

Belongs to the bacterial ribosomal protein bL33 family.

It is found in the plastid. It localises to the chloroplast. This Huperzia lucidula (Shining clubmoss) protein is Large ribosomal subunit protein bL33c.